The primary structure comprises 142 residues: Transcription antitermination protein NusB (142 aa).

This sequence belongs to the NusB family.

In terms of biological role, involved in transcription antitermination. Required for transcription of ribosomal RNA (rRNA) genes. Binds specifically to the boxA antiterminator sequence of the ribosomal RNA (rrn) operons. In Borrelia garinii subsp. bavariensis (strain ATCC BAA-2496 / DSM 23469 / PBi) (Borreliella bavariensis), this protein is Transcription antitermination protein NusB.